Here is a 472-residue protein sequence, read N- to C-terminus: Regulator of G-protein signaling 6 (472 aa).

One can recognise a DEP domain in the interval Lys40–Ala115. Residues Ile261–Val330 enclose the G protein gamma domain. The region spanning Ser336–Phe441 is the RGS domain.

Interacts with GNB5. Interacts with RGS7BP, leading to regulate the subcellular location of the heterodimer formed with GNB5. Interacts with GNAI1.

It is found in the cytoplasm. The protein localises to the cytosol. Its subcellular location is the membrane. The protein resides in the nucleus. It localises to the cell membrane. In terms of biological role, regulates G protein-coupled receptor signaling cascades. Inhibits signal transduction by increasing the GTPase activity of G protein alpha subunits, thereby driving them into their inactive GDP-bound form. The RGS6/GNB5 dimer enhances GNAO1 GTPase activity. This is Regulator of G-protein signaling 6 (RGS6) from Homo sapiens (Human).